Consider the following 98-residue polypeptide: Integration host factor subunit alpha (98 aa).

Residues 51 to 71 (NFDLRDKNERPGRNPKTGEDI) form a disordered region. The segment covering 53-69 (DLRDKNERPGRNPKTGE) has biased composition (basic and acidic residues).

This sequence belongs to the bacterial histone-like protein family. As to quaternary structure, heterodimer of an alpha and a beta chain.

In terms of biological role, this protein is one of the two subunits of integration host factor, a specific DNA-binding protein that functions in genetic recombination as well as in transcriptional and translational control. The sequence is that of Integration host factor subunit alpha from Vibrio parahaemolyticus serotype O3:K6 (strain RIMD 2210633).